Here is a 306-residue protein sequence, read N- to C-terminus: Stimulator of interferon genes protein 5 (306 aa).

A disordered region spans residues 1–50; that stretch reads MMSNDSQSEKRTAKWTGSGTPIAEGEESSSPSAHQTRQKATAADDDDDQQ. Positions 119, 180, and 186 each coordinate 2',3'-cGAMP.

The protein belongs to the STING family.

Its function is as follows. Facilitator of innate immune signaling that acts as a sensor of second messenger signals produced by cyclic GMP-AMP synthase-like receptors (cGLRs) and promotes the production of type I interferon. Innate immune response is triggered in response to nucleotides from viruses and bacteria delivered to the cytoplasm. Acts by binding cyclic dinucleotides: recognizes and binds 2'-3' linked cGAMP (2'-3'-cGAMP), a second messengers produced by cGLRs in response to nucleotides in the cytosol, such as double-stranded RNA (dsRNA). Upon binding to 2'-3'-cGAMP, oligomerizes and promotes the recruitment and subsequent activation of the transcription factor IRF3 to induce expression of type I interferon. This Stylophora pistillata (Smooth cauliflower coral) protein is Stimulator of interferon genes protein 5.